The following is a 127-amino-acid chain: MARIAGVDLPKRKRIEIGLTYIFGIGRSTSSKILEELGIDPDTKTDDLTEGQVNDIRKLIDSKYRVEGELRTQISMNIKRLMDLGCYRGLRHRRGLPVHGQRTSTNARTRKGPRRAAVKKKGGAKKK.

The tract at residues 95–127 (GLPVHGQRTSTNARTRKGPRRAAVKKKGGAKKK) is disordered. The span at 108–127 (RTRKGPRRAAVKKKGGAKKK) shows a compositional bias: basic residues.

The protein belongs to the universal ribosomal protein uS13 family. In terms of assembly, part of the 30S ribosomal subunit. Forms a loose heterodimer with protein S19. Forms two bridges to the 50S subunit in the 70S ribosome.

In terms of biological role, located at the top of the head of the 30S subunit, it contacts several helices of the 16S rRNA. In the 70S ribosome it contacts the 23S rRNA (bridge B1a) and protein L5 of the 50S subunit (bridge B1b), connecting the 2 subunits; these bridges are implicated in subunit movement. Contacts the tRNAs in the A and P-sites. This chain is Small ribosomal subunit protein uS13, found in Desulfatibacillum aliphaticivorans.